Here is a 653-residue protein sequence, read N- to C-terminus: Protein CBFA2T3 (653 aa).

A compositionally biased stretch (basic and acidic residues) spans 1–10 (MPASRLRDRA). The segment at 1–109 (MPASRLRDRA…HTHREDGPAT (109 aa)) is disordered. Positions 1 to 127 (MPASRLRDRA…CLKWSMVCLL (127 aa)) are required for nucleolar targeting (in isoform 1). Residues 1-430 (MPASRLRDRA…RRCQEADREE (430 aa)) are mediates interaction with PDE7A (in isoform 2). Residues 1-435 (MPASRLRDRA…ADREELNHWA (435 aa)) form a mediates localization to the nucleus region. The span at 11 to 23 (ASSASGSTCGSMS) shows a compositional bias: low complexity. Residues 75–86 (STPPSMPPPPPA) show a composition bias toward pro residues. An interaction with ZBTB33 region spans residues 145-242 (PNGFSNGPAT…IPFLKANLPL (98 aa)). The region spanning 171-266 (ARQLSKLKRF…TPAQYLAQHE (96 aa)) is the TAFH domain. The interaction with HIF1A stretch occupies residues 176 to 268 (KLKRFLTTLQ…AQYLAQHEQL (93 aa)). The interval 284–342 (LLEVNENGKRRTPDRTKENGSDRDPLHPEHLSKRPCTLNPAQRYSPSNGPPQPTPPPHY) is disordered. The span at 289–315 (ENGKRRTPDRTKENGSDRDPLHPEHLS) shows a compositional bias: basic and acidic residues. The segment covering 331 to 341 (NGPPQPTPPPH) has biased composition (pro residues). Positions 394–412 (EEWKHLNNLLNCIMDMVEK) are nervy homology region 2 (NHR2); essential for down-regulation of PFKFB3, PFKFB4 and PDK1 expression. The segment covering 434 to 446 (WARRYSDAEDTKK) has biased composition (basic and acidic residues). The tract at residues 434–472 (WARRYSDAEDTKKGPAPAAARPRSSSAGPEGPQLDVPRE) is disordered. Residues 447 to 462 (GPAPAAARPRSSSAGP) are compositionally biased toward low complexity. Residues serine 457 and serine 459 each carry the phosphoserine modification. The residue at position 479 (threonine 479) is a Phosphothreonine. The tract at residues 485–506 (DIWRKAEEAVNEVKRQAMSELQ) is mediates interaction with PRKAR2A. A nervy homology region 3 (NHR3); essential for down-regulation of PFKFB3, PFKFB4 and PDK1 expression region spans residues 485-533 (DIWRKAEEAVNEVKRQAMSELQKAVSDAERKAHELITTERAKMERALAE). A coiled-coil region spans residues 488 to 543 (RKAEEAVNEVKRQAMSELQKAVSDAERKAHELITTERAKMERALAEAKRQASEDAL). Zn(2+) contacts are provided by cysteine 556, cysteine 559, cysteine 567, cysteine 570, cysteine 576, cysteine 580, histidine 588, and cysteine 592. The MYND-type zinc-finger motif lies at 556–592 (CWNCGRKASETCSGCNAARYCGSFCQHRDWEKHHHVC). Residues 603-653 (VADPVPGPPEAAHSLGPSLPVGAASPSEAGSAGPSRPGSPSPPGPLDTVPR) form a disordered region. Residues 622–638 (PVGAASPSEAGSAGPSR) show a composition bias toward low complexity. Phosphoserine occurs at positions 637 and 641. Threonine 650 is subject to Phosphothreonine.

The protein belongs to the CBFA2T family. In terms of assembly, homooligomer. Homotetramerization is mediated by nervy homology region 2 (NRH2). Can interact with RUNX1T1 and CBFA2T2; heterotetramerization between members of the CBFA2T family is proposed. Component of a TAL-1 complex composed at least of CBFA2T3, LDB1, TAL1 and TCF3. Interacts with ERBB4, HDAC1, HDAC2, HDAC3, HDAC6, HDAC8, NCOR1, NCOR2, and ZNF652. According to PubMed:12242670, may not interact with HDAC6. Interacts with PLXNA1, PLXNA3 and PRKAR1A. Isoform 2 interacts with PRKAR2A, PDE7A and probably PDE4A. Interacts with ZBTB4, ZBTB38 and ZBTB33. Interacts with HIF1A and EGLN1. Interacts with the AML1-MTG8/ETO fusion protein. In terms of tissue distribution, widely expressed with higher expression in heart, pancreas, skeletal muscle, spleen, thymus and peripheral blood leukocytes. Expressed in hematopoietic cells (at protein level).

It is found in the nucleus. The protein resides in the nucleolus. It localises to the nucleoplasm. Its subcellular location is the golgi apparatus membrane. Transcriptional corepressor which facilitates transcriptional repression via its association with DNA-binding transcription factors and recruitment of other corepressors and histone-modifying enzymes. Can repress the expression of MMP7 in a ZBTB33-dependent manner. Reduces the protein levels and stability of the transcriptinal regulator HIF1A; interacts with EGLN1 and promotes the HIF1A prolyl hydroxylation-dependent ubiquitination and proteasomal degradation pathway. Contributes to inhibition of glycolysis and stimulation of mitochondrial respiration by down-regulating the expression of glycolytic genes including PFKFB3, PFKFB4, PDK1, PFKP, LDHA and HK1 which are direct targets of HIF1A. Regulates the proliferation and the differentiation of erythroid progenitors by repressing the expression of TAL1 target genes. Plays a role in granulocyte differentiation. In terms of biological role, isoform 2 functions as an A-kinase-anchoring protein. The sequence is that of Protein CBFA2T3 (CBFA2T3) from Homo sapiens (Human).